The following is an 881-amino-acid chain: MKLTPMMQQYLEVKEKCKDCILFFRLGDFYEMFFEDAETASKELELVLTGRDCGLSKRAPMCGIPYHSASNYINRLVSKGYKIAICEQLEDPSAAKGIVKRDIVKIVTPGTYSDSNFLNETKNNYIMSLYIEDKSVAMCFCDISTGDFFATSHSLDKSIILDEISKFDPSELLLNKDIDKNILKEIKNRFTISITNLEKDYFKDYNLLEGQFSDFSKEEYSLVLIKCGNGLLKYILETQKMSLGHIDCFKNYNIVDYLSMDINSRRNLEITETIRDKSRKGSLLWVLDKCSTAMGARLIRNWVEQPLINKEKIDKRLNAVEELVLNISLHEDLKDALKDIYDIQRIVGKISSKNVNAKELLSLKNSIEKLPYIKDILSKLEADLFKDMLSNLDELKDIYELLESSIMDNPPITIKDGNLIKNGFNKEIDELRMAKSHGKEWIANLESSEREFTGIKSLKVGYNKVFGYFIEVTKSNISSVPEGRYVRKQTLSNCERYITPELKEMEDKILGAEEKLISLEYEVFVSIRNSIEKDIDRMKISANIVAILDCLSSLSTVALENNYSKPKILEGNDIIIKDGRHPVVEKMIPTGSFVANDTTMDTEDNQMLLITGPNMAGKSTYMRQVALITIMAQIGSFVPAKEASISLCDKIFTRIGASDDLSAGKSTFMVEMWEVSNILKNATSKSLIILDEVGRGTSTFDGLSIAWAVIEYICNNKNLRSKTLFATHYHELIQLENKIKGVKNYSVSVKEMDKDIVFLRKIIEGGADQSYGIEVAKLAGLPEDVIIRAKEILNSIEQNKDNKIELDDIKENKNHIEKENKKEIATDKLLANDDFQISFTQIEEENLIKEISSIDILNLNPMEGFNKLYDLINKAKSIEKK.

612 to 619 serves as a coordination point for ATP; it reads GPNMAGKS.

The protein belongs to the DNA mismatch repair MutS family.

In terms of biological role, this protein is involved in the repair of mismatches in DNA. It is possible that it carries out the mismatch recognition step. This protein has a weak ATPase activity. The protein is DNA mismatch repair protein MutS of Clostridium tetani (strain Massachusetts / E88).